The sequence spans 330 residues: MKTAYIAKQRQISFVKSHFSRQLEERLGLIEVQAPILSRVGDGTQDNLSGCEKAVQVKVKALPDAQFEVVHSLAKWKRQTLGQHDFSAGEGLYTHMKALRPDEDRLSPLHSVYVDQWDWERVMGDGERQFSTLKSTVEAIWAGIKATEAAVSEEFGLAPFLPDQIHFVHSQELLSRYPDLDAKGRERAIAKDLGAVFLVGIGGKLSDGHRHDVRAPDYDDWSTPSELGHAGLNGDILVWNPVLEDAFELSSMGIRVDADTLKHQLALTGDEDRLELEWHQALLRGEMPQTIGGGIGQSRLTMLLLQLPHIGQVQCGVWPAAVRESVPSLL.

The protein belongs to the class-II aminoacyl-tRNA synthetase family. AsnA subfamily.

The protein localises to the cytoplasm. It carries out the reaction L-aspartate + NH4(+) + ATP = L-asparagine + AMP + diphosphate + H(+). Its pathway is amino-acid biosynthesis; L-asparagine biosynthesis; L-asparagine from L-aspartate (ammonia route): step 1/1. This Escherichia coli O81 (strain ED1a) protein is Aspartate--ammonia ligase.